The chain runs to 281 residues: Ribosomal RNA small subunit methyltransferase A (281 aa).

S-adenosyl-L-methionine-binding residues include asparagine 35, leucine 37, glycine 62, glutamate 83, aspartate 107, and asparagine 125.

This sequence belongs to the class I-like SAM-binding methyltransferase superfamily. rRNA adenine N(6)-methyltransferase family. RsmA subfamily.

It localises to the cytoplasm. The enzyme catalyses adenosine(1518)/adenosine(1519) in 16S rRNA + 4 S-adenosyl-L-methionine = N(6)-dimethyladenosine(1518)/N(6)-dimethyladenosine(1519) in 16S rRNA + 4 S-adenosyl-L-homocysteine + 4 H(+). In terms of biological role, specifically dimethylates two adjacent adenosines (A1518 and A1519) in the loop of a conserved hairpin near the 3'-end of 16S rRNA in the 30S particle. May play a critical role in biogenesis of 30S subunits. In Deinococcus geothermalis (strain DSM 11300 / CIP 105573 / AG-3a), this protein is Ribosomal RNA small subunit methyltransferase A.